Here is a 514-residue protein sequence, read N- to C-terminus: Probable transposase for insertion sequence element IS1353 (514 aa).

A coiled-coil region spans residues K172–M216. The 165-residue stretch at H346 to G510 folds into the Integrase catalytic domain. Residues D357 and D417 each contribute to the Mg(2+) site.

It belongs to the transposase 8 family.

Probably involved in the transposition of insertion sequence IS1353. The chain is Probable transposase for insertion sequence element IS1353 from Shigella flexneri.